We begin with the raw amino-acid sequence, 220 residues long: Large ribosomal subunit protein uL1 (220 aa).

The protein belongs to the universal ribosomal protein uL1 family. Part of the 50S ribosomal subunit.

Functionally, binds directly to 23S rRNA. The L1 stalk is quite mobile in the ribosome, and is involved in E site tRNA release. Protein L1 is also a translational repressor protein, it controls the translation of the L11 operon by binding to its mRNA. The polypeptide is Large ribosomal subunit protein uL1 (Ehrlichia ruminantium (strain Gardel)).